A 409-amino-acid chain; its full sequence is Tyrosine--tRNA ligase (409 aa).

The 'HIGH' region signature appears at 54–63 (PTAPDIHLGH). Residues 238 to 242 (KMSKS) carry the 'KMSKS' region motif. Residue Lys-241 coordinates ATP. An S4 RNA-binding domain is found at 347–407 (QGILRILREA…GKRKFARVKL (61 aa)).

This sequence belongs to the class-I aminoacyl-tRNA synthetase family. TyrS type 2 subfamily. In terms of assembly, homodimer.

The protein resides in the cytoplasm. It catalyses the reaction tRNA(Tyr) + L-tyrosine + ATP = L-tyrosyl-tRNA(Tyr) + AMP + diphosphate + H(+). Catalyzes the attachment of tyrosine to tRNA(Tyr) in a two-step reaction: tyrosine is first activated by ATP to form Tyr-AMP and then transferred to the acceptor end of tRNA(Tyr). In Bordetella bronchiseptica (strain ATCC BAA-588 / NCTC 13252 / RB50) (Alcaligenes bronchisepticus), this protein is Tyrosine--tRNA ligase.